We begin with the raw amino-acid sequence, 495 residues long: Putative BTB/POZ domain-containing protein L98 (495 aa).

The region spanning 15 to 85 (SDLTIEFVDN…FYGIETTNDY (71 aa)) is the BTB domain.

It belongs to the mimivirus BTB/WD family.

This chain is Putative BTB/POZ domain-containing protein L98, found in Acanthamoeba polyphaga (Amoeba).